The following is a 215-amino-acid chain: Cytidylate kinase (215 aa).

Position 10-18 (10-18) interacts with ATP; sequence GPAASGKGT.

This sequence belongs to the cytidylate kinase family. Type 1 subfamily.

It localises to the cytoplasm. The catalysed reaction is CMP + ATP = CDP + ADP. The enzyme catalyses dCMP + ATP = dCDP + ADP. In Bartonella henselae (strain ATCC 49882 / DSM 28221 / CCUG 30454 / Houston 1) (Rochalimaea henselae), this protein is Cytidylate kinase.